The chain runs to 395 residues: 1-deoxy-D-xylulose 5-phosphate reductoisomerase (395 aa).

NADPH-binding residues include threonine 15, glycine 16, serine 17, isoleucine 18, glycine 41, asparagine 43, and asparagine 126. Lysine 127 serves as a coordination point for 1-deoxy-D-xylulose 5-phosphate. Glutamate 128 provides a ligand contact to NADPH. Aspartate 152 contributes to the Mn(2+) binding site. 1-deoxy-D-xylulose 5-phosphate is bound by residues serine 153, glutamate 154, serine 178, and histidine 201. Mn(2+) is bound at residue glutamate 154. Glycine 207 lines the NADPH pocket. The 1-deoxy-D-xylulose 5-phosphate site is built by serine 214, asparagine 219, lysine 220, and glutamate 223. Mn(2+) is bound at residue glutamate 223.

The protein belongs to the DXR family. The cofactor is Mg(2+). Mn(2+) is required as a cofactor.

The catalysed reaction is 2-C-methyl-D-erythritol 4-phosphate + NADP(+) = 1-deoxy-D-xylulose 5-phosphate + NADPH + H(+). The protein operates within isoprenoid biosynthesis; isopentenyl diphosphate biosynthesis via DXP pathway; isopentenyl diphosphate from 1-deoxy-D-xylulose 5-phosphate: step 1/6. Functionally, catalyzes the NADPH-dependent rearrangement and reduction of 1-deoxy-D-xylulose-5-phosphate (DXP) to 2-C-methyl-D-erythritol 4-phosphate (MEP). The chain is 1-deoxy-D-xylulose 5-phosphate reductoisomerase from Ruegeria pomeroyi (strain ATCC 700808 / DSM 15171 / DSS-3) (Silicibacter pomeroyi).